The chain runs to 28 residues: Cyclotide ltri-A (28 aa).

A cross-link (cyclopeptide (Gly-Asn)) is located at residues 1–28; it reads GVACGESCVYLPCFTVGCTCTSSQCFKN. Intrachain disulfides connect cysteine 4-cysteine 18, cysteine 8-cysteine 20, and cysteine 13-cysteine 25.

This sequence belongs to the cyclotide family. Bracelet subfamily. In terms of processing, this is a cyclic peptide.

Its function is as follows. Probably participates in a plant defense mechanism. In Leonia triandra, this protein is Cyclotide ltri-A.